A 567-amino-acid chain; its full sequence is Adenine deaminase 2 (567 aa).

The protein belongs to the metallo-dependent hydrolases superfamily. Adenine deaminase family. The cofactor is Mn(2+).

It carries out the reaction adenine + H2O + H(+) = hypoxanthine + NH4(+). This chain is Adenine deaminase 2, found in Oenococcus oeni (strain ATCC BAA-331 / PSU-1).